A 293-amino-acid chain; its full sequence is Glycine--tRNA ligase alpha subunit (293 aa).

Belongs to the class-II aminoacyl-tRNA synthetase family. Tetramer of two alpha and two beta subunits.

It is found in the cytoplasm. The enzyme catalyses tRNA(Gly) + glycine + ATP = glycyl-tRNA(Gly) + AMP + diphosphate. This is Glycine--tRNA ligase alpha subunit from Picosynechococcus sp. (strain ATCC 27264 / PCC 7002 / PR-6) (Agmenellum quadruplicatum).